A 455-amino-acid chain; its full sequence is Nuclear receptor subfamily 6 group A member 1-B (455 aa).

A DNA-binding region (nuclear receptor) is located at residues Glu-38–Glu-113. 2 consecutive NR C4-type zinc fingers follow at residues Cys-41–Cys-61 and Cys-77–Cys-96. Residues Glu-145–Ser-173 form a disordered region. Polar residues predominate over residues Leu-149–Asn-165. The 232-residue stretch at Gln-215–Trp-446 folds into the NR LBD domain.

The protein belongs to the nuclear hormone receptor family. NR6 subfamily. As to quaternary structure, homodimer.

Its subcellular location is the nucleus. Functionally, probable orphan nuclear receptor. Binds to a response element containing repeats of the motif 5'-AGGTCA-3'. This is Nuclear receptor subfamily 6 group A member 1-B from Danio rerio (Zebrafish).